A 333-amino-acid chain; its full sequence is Probable cytosolic iron-sulfur protein assembly protein 1 (333 aa).

WD repeat units lie at residues 12–50 (LHDDKCWSVDVNNGGIMATGSTDRKIKLVDIRSFQIIEE), 55–94 (AHKKTVRSVAWRPHSNILAAGSFDSTVSIWGKDDDGYNDE), 107–146 (GHENEIKCVAWSHDGELLATCSRDKSVWIWEADEMGEEFE), 153–192 (EHSQDVKHVIWHQSLPLLASSSYDDTVRIWKDCDDDWECC), 197–238 (GHEG…GEYE), 250–288 (AHTRAVYSVNWSPKGYIASTGSDGRLVIYKESEDGWIVE), and 298–333 (YETNMVKWVEYGSKDVILLITAGDDGHVNVWKFDEN).

This sequence belongs to the WD repeat CIA1 family. As to quaternary structure, interacts with NAR1.

It is found in the cytoplasm. The protein localises to the nucleus. Its function is as follows. Essential component of the cytosolic iron-sulfur (Fe/S) protein assembly machinery. Required for the maturation of extramitochondrial Fe/S proteins. This chain is Probable cytosolic iron-sulfur protein assembly protein 1, found in Kluyveromyces lactis (strain ATCC 8585 / CBS 2359 / DSM 70799 / NBRC 1267 / NRRL Y-1140 / WM37) (Yeast).